The primary structure comprises 484 residues: tRNA sulfurtransferase (484 aa).

The THUMP domain occupies 63–167 (EAFADRLSCI…RENLYLVVNR (105 aa)). Residues 185 to 186 (LI), lysine 267, glycine 289, and glutamine 298 contribute to the ATP site. The cysteines at positions 346 and 458 are disulfide-linked. One can recognise a Rhodanese domain in the interval 406–484 (VNSNEVIIDV…GYENVKVYRP (79 aa)). Catalysis depends on cysteine 458, which acts as the Cysteine persulfide intermediate.

The protein belongs to the ThiI family.

It localises to the cytoplasm. The catalysed reaction is [ThiI sulfur-carrier protein]-S-sulfanyl-L-cysteine + a uridine in tRNA + 2 reduced [2Fe-2S]-[ferredoxin] + ATP + H(+) = [ThiI sulfur-carrier protein]-L-cysteine + a 4-thiouridine in tRNA + 2 oxidized [2Fe-2S]-[ferredoxin] + AMP + diphosphate. The enzyme catalyses [ThiS sulfur-carrier protein]-C-terminal Gly-Gly-AMP + S-sulfanyl-L-cysteinyl-[cysteine desulfurase] + AH2 = [ThiS sulfur-carrier protein]-C-terminal-Gly-aminoethanethioate + L-cysteinyl-[cysteine desulfurase] + A + AMP + 2 H(+). It participates in cofactor biosynthesis; thiamine diphosphate biosynthesis. In terms of biological role, catalyzes the ATP-dependent transfer of a sulfur to tRNA to produce 4-thiouridine in position 8 of tRNAs, which functions as a near-UV photosensor. Also catalyzes the transfer of sulfur to the sulfur carrier protein ThiS, forming ThiS-thiocarboxylate. This is a step in the synthesis of thiazole, in the thiamine biosynthesis pathway. The sulfur is donated as persulfide by IscS. The sequence is that of tRNA sulfurtransferase from Shewanella sediminis (strain HAW-EB3).